The sequence spans 302 residues: Diacetylchitobiose uptake system permease protein NgcG (302 aa).

Helical transmembrane passes span 40–60, 99–119, 131–151, 166–186, 221–241, and 268–288; these read LLIL…MSSF, VIVV…CAYV, IYYV…VPLF, LILT…YSFF, AAVA…PVAL, and GALF…YCVF. The 194-residue stretch at 95–288 folds into the ABC transmembrane type-1 domain; the sequence is FLNSVIVVVS…VPVLLVYCVF (194 aa).

It belongs to the binding-protein-dependent transport system permease family. In terms of assembly, the complex is composed of two ATP-binding proteins (MsiK), two transmembrane proteins (NgcF and NgcG) and a solute-binding protein (NgcE).

The protein resides in the cell membrane. Part of the ABC transporter complex NgcEFG-MsiK involved in N,N'-diacetylchitobiose ((GlcNAc)2) uptake. Responsible for the translocation of the substrate across the membrane. The protein is Diacetylchitobiose uptake system permease protein NgcG of Streptomyces coelicolor (strain ATCC BAA-471 / A3(2) / M145).